The following is a 345-amino-acid chain: N-acetyl-gamma-glutamyl-phosphate reductase (345 aa).

Cysteine 149 is an active-site residue.

The protein belongs to the NAGSA dehydrogenase family. Type 1 subfamily.

The protein resides in the cytoplasm. The enzyme catalyses N-acetyl-L-glutamate 5-semialdehyde + phosphate + NADP(+) = N-acetyl-L-glutamyl 5-phosphate + NADPH + H(+). It functions in the pathway amino-acid biosynthesis; L-arginine biosynthesis; N(2)-acetyl-L-ornithine from L-glutamate: step 3/4. Functionally, catalyzes the NADPH-dependent reduction of N-acetyl-5-glutamyl phosphate to yield N-acetyl-L-glutamate 5-semialdehyde. The polypeptide is N-acetyl-gamma-glutamyl-phosphate reductase (Bacillus anthracis).